The chain runs to 267 residues: Mannose-specific lectin 1 (267 aa).

The first 26 residues, 1-26 (MAKLLLFLLPAILGLLVPPRSWSAVA), serve as a signal peptide directing secretion. 2 Bulb-type lectin domains span residues 29–134 (TNYL…PSVP) and 148–255 (NNLL…PQAK). Residues 54–58 (QDDCN), tyrosine 62, tryptophan 66, glutamine 67, 173–177 (QGDCN), tyrosine 181, and 185–188 (YGWQ) each bind beta-D-mannose. The Carbohydrate-binding motif 1 motif lies at 54-62 (QDDCNLVLY). 2 disulfide bridges follow: cysteine 57–cysteine 77 and cysteine 176–cysteine 198. The short motif at 173–181 (QGDCNLVLY) is the Carbohydrate-binding motif 2 element.

In terms of assembly, forms heterotetramer of 2 chains 1 and 2 chains 2 arranged as a dimer of chain 1 and chain 2 heterodimers.

It localises to the secreted. In terms of biological role, mannose-specific lectin. Shows agglutinating activity towards erythrocytes from rabbit. In Colocasia esculenta (Wild taro), this protein is Mannose-specific lectin 1.